The following is a 348-amino-acid chain: tRNA N6-adenosine threonylcarbamoyltransferase (348 aa).

Positions 119 and 123 each coordinate Fe cation. Substrate is bound by residues 141-145 (LVSGG), Asp174, Gly187, Asp191, and Asn280. Position 310 (Asp310) interacts with Fe cation.

The protein belongs to the KAE1 / TsaD family. It depends on Fe(2+) as a cofactor.

The protein resides in the cytoplasm. The enzyme catalyses L-threonylcarbamoyladenylate + adenosine(37) in tRNA = N(6)-L-threonylcarbamoyladenosine(37) in tRNA + AMP + H(+). Its function is as follows. Required for the formation of a threonylcarbamoyl group on adenosine at position 37 (t(6)A37) in tRNAs that read codons beginning with adenine. Is involved in the transfer of the threonylcarbamoyl moiety of threonylcarbamoyl-AMP (TC-AMP) to the N6 group of A37, together with TsaE and TsaB. TsaD likely plays a direct catalytic role in this reaction. In Enterococcus faecalis (strain ATCC 700802 / V583), this protein is tRNA N6-adenosine threonylcarbamoyltransferase.